Here is a 756-residue protein sequence, read N- to C-terminus: Catalase-peroxidase (756 aa).

Positions 91–244 form a cross-link, tryptophyl-tyrosyl-methioninium (Trp-Tyr) (with M-270); sequence WHSAGTYRTG…LAAVQMGLIY (154 aa). H92 serves as the catalytic Proton acceptor. Positions 198–230 are disordered; sequence AQKKMQQPGDGTLVAEPENHANEESRTASGERN. Over residues 214–223 the composition is skewed to basic and acidic residues; that stretch reads PENHANEESR. The tryptophyl-tyrosyl-methioninium (Tyr-Met) (with W-91) cross-link spans 244–270; it reads YVNPEGPEGVPDPVASARDIRETFGRM. Heme b is bound at residue H285. The disordered stretch occupies residues 371–390; it reads KNGAGAGKIPDAHDPSKRHA.

Belongs to the peroxidase family. Peroxidase/catalase subfamily. As to quaternary structure, homodimer or homotetramer. The cofactor is heme b. In terms of processing, formation of the three residue Trp-Tyr-Met cross-link is important for the catalase, but not the peroxidase activity of the enzyme.

It carries out the reaction H2O2 + AH2 = A + 2 H2O. The catalysed reaction is 2 H2O2 = O2 + 2 H2O. Functionally, bifunctional enzyme with both catalase and broad-spectrum peroxidase activity. The polypeptide is Catalase-peroxidase (Pseudomonas syringae pv. tomato (strain ATCC BAA-871 / DC3000)).